A 478-amino-acid polypeptide reads, in one-letter code: Methionine aminopeptidase 2 (478 aa).

Residues 1 to 122 are disordered; the sequence is MAGVEEVAAS…TDPPSVPICD (122 aa). A2 is modified (N-acetylalanine). Residues 36 to 46 show a composition bias toward basic residues; that stretch reads KKKRRKKKKSK. S45 is subject to Phosphoserine. Residues 55–79 show a composition bias toward basic and acidic residues; the sequence is EPDKESGASVDEVARQLERSALEDK. S60 and S63 each carry phosphoserine; alternate. O-linked (GlcNAc) serine; alternate glycans are attached at residues S60 and S63. S74 carries the phosphoserine modification. Residues 80 to 92 are compositionally biased toward acidic residues; sequence ERDEDDEDGDGDG. The span at 97-109 shows a compositional bias: basic residues; it reads GKKKKKKKKKRGP. H231 is a substrate binding site. Residues D251, D262, and H331 each coordinate a divalent metal cation. H339 is a binding site for substrate. Residues E364 and E459 each coordinate a divalent metal cation.

This sequence belongs to the peptidase M24A family. Methionine aminopeptidase eukaryotic type 2 subfamily. Interacts strongly with the eIF-2 gamma-subunit EIF2S3. Binds EIF2S1 at low magnesium concentrations. It depends on Co(2+) as a cofactor. The cofactor is Zn(2+). Requires Mn(2+) as cofactor. Fe(2+) is required as a cofactor. Post-translationally, contains approximately 12 O-linked N-acetylglucosamine (GlcNAc) residues. O-glycosylation is required for EIF2S1 binding.

The protein resides in the cytoplasm. It catalyses the reaction Release of N-terminal amino acids, preferentially methionine, from peptides and arylamides.. In terms of biological role, cotranslationally removes the N-terminal methionine from nascent proteins. The N-terminal methionine is often cleaved when the second residue in the primary sequence is small and uncharged (Met-Ala-, Cys, Gly, Pro, Ser, Thr, or Val). The catalytic activity of human METAP2 toward Met-Val peptides is consistently two orders of magnitude higher than that of METAP1, suggesting that it is responsible for processing proteins containing N-terminal Met-Val and Met-Thr sequences in vivo. Protects eukaryotic initiation factor EIF2S1 from translation-inhibiting phosphorylation by inhibitory kinases such as EIF2AK2/PKR and EIF2AK1/HCR. Plays a critical role in the regulation of protein synthesis. The chain is Methionine aminopeptidase 2 from Homo sapiens (Human).